Reading from the N-terminus, the 89-residue chain is Protein S100-A6 (89 aa).

EF-hand domains lie at 12-47 (LVAI…IGAK) and 48-83 (LQDA…LALI). The Ca(2+) site is built by threonine 28 and glutamate 33. Lysine 40 is modified (N6-acetyllysine). Lysine 47 carries the N6-acetyllysine; alternate modification. N6-succinyllysine; alternate is present on lysine 47. Ca(2+) contacts are provided by aspartate 61, asparagine 63, aspartate 65, glutamate 67, and glutamate 72.

This sequence belongs to the S-100 family. In terms of assembly, homodimer; head to tail assembly of 2 subunits. Interacts with CACYBP in a calcium-dependent manner. Interacts with ANXA2 and ANXA11 (via N-terminus). Interacts with SUGT1. Interacts with TP53; has higher affinity for TP53 that is phosphorylated on its N-terminal domain, and lower affinity for TP53 that is phosphorylated on its C-terminal domain. Interacts with tropomyosin. Interacts with FKBP4. Interacts with PPP5C (via TPR repeats); the interaction is calcium-dependent and modulates PPP5C activity. Interacts with TPPP; this interaction inhibits TPPP dimerization.

The protein localises to the nucleus envelope. It localises to the cytoplasm. Its subcellular location is the cell membrane. In terms of biological role, may function as calcium sensor and modulator, contributing to cellular calcium signaling. May function by interacting with other proteins, such as TPR-containing proteins, and indirectly play a role in many physiological processes such as the reorganization of the actin cytoskeleton and in cell motility. Binds 2 calcium ions. Calcium binding is cooperative. The polypeptide is Protein S100-A6 (S100a6) (Rattus norvegicus (Rat)).